The chain runs to 223 residues: MEVKDILKTVDHTLLATTATWPEIQTILDDAMAYETASACIPASYVKKAAEYVSGKLAICTVIGFPNGYSTTAAKVFECQDAIQNGADEIDMVINLTDVKNGDFDTVEEEIRQIKAKCQDHILKVIVETCQLTKEELIELCGVVTRSGADFIKTSTGFSTAGATFEDVEVMAKYVGEGVKIKAAGGISSLEDAKTFIALGASRLGTSRIIKIVKNEATKPDSY.

Asp-91 (proton donor/acceptor) is an active-site residue. Lys-153 functions as the Schiff-base intermediate with acetaldehyde in the catalytic mechanism. Residue Lys-182 is the Proton donor/acceptor of the active site.

It belongs to the DeoC/FbaB aldolase family. DeoC type 1 subfamily.

The protein resides in the cytoplasm. It catalyses the reaction 2-deoxy-D-ribose 5-phosphate = D-glyceraldehyde 3-phosphate + acetaldehyde. The protein operates within carbohydrate degradation; 2-deoxy-D-ribose 1-phosphate degradation; D-glyceraldehyde 3-phosphate and acetaldehyde from 2-deoxy-alpha-D-ribose 1-phosphate: step 2/2. Its function is as follows. Catalyzes a reversible aldol reaction between acetaldehyde and D-glyceraldehyde 3-phosphate to generate 2-deoxy-D-ribose 5-phosphate. The sequence is that of Deoxyribose-phosphate aldolase from Streptococcus pyogenes serotype M3 (strain ATCC BAA-595 / MGAS315).